We begin with the raw amino-acid sequence, 126 residues long: Small ribosomal subunit protein uS13 (126 aa).

The tract at residues 96-126 (LPVHGQRTHTNARTRKGPRRAIAGKKKAGKK) is disordered.

The protein belongs to the universal ribosomal protein uS13 family. Part of the 30S ribosomal subunit. Forms a loose heterodimer with protein S19. Forms two bridges to the 50S subunit in the 70S ribosome.

Located at the top of the head of the 30S subunit, it contacts several helices of the 16S rRNA. In the 70S ribosome it contacts the 23S rRNA (bridge B1a) and protein L5 of the 50S subunit (bridge B1b), connecting the 2 subunits; these bridges are implicated in subunit movement. Contacts the tRNAs in the A and P-sites. This chain is Small ribosomal subunit protein uS13, found in Frankia alni (strain DSM 45986 / CECT 9034 / ACN14a).